A 131-amino-acid chain; its full sequence is Small ribosomal subunit protein eS6 (131 aa).

Belongs to the eukaryotic ribosomal protein eS6 family.

The polypeptide is Small ribosomal subunit protein eS6 (Halobacterium salinarum (strain ATCC 29341 / DSM 671 / R1)).